The primary structure comprises 553 residues: Hyaluronan synthase 3 (553 aa).

The Cytoplasmic segment spans residues 1 to 15 (MPVQLTTALRVVGTS). The helical transmembrane segment at 16–36 (LFALAVLGGILAAYVTGYQFI) threads the bilayer. Residues 37–44 (HTEKHYLS) lie on the Extracellular side of the membrane. A helical membrane pass occupies residues 45–65 (FGLYGAILGLHLLIQSLFAFL). At 66 to 377 (EHRRMRRAGQ…NSLWFHKHHL (312 aa)) the chain is on the cytoplasmic side. The chain crosses the membrane as a helical span at residues 378–398 (WMTYESVVTGFFPFFLIATVI). At 399–408 (QLFYRGRIWN) the chain is on the extracellular side. Residues 409-429 (ILLFLLTVQLVGIIKATYACF) form a helical membrane-spanning segment. At 430–440 (LRGNAEMIFMS) the chain is on the cytoplasmic side. The helical transmembrane segment at 441–461 (LYSLLYMSSLLPAKIFAIATI) threads the bilayer. Asn-462 is a glycosylation site (N-linked (GlcNAc...) asparagine). The Extracellular segment spans residues 462–473 (NKSGWGTSGRKT). The helical transmembrane segment at 474–494 (IVVNFIGLIPVSIWVAVLLGG) threads the bilayer. Topologically, residues 495–515 (LAYTAYCQDLFSETELAFLVS) are cytoplasmic. The chain crosses the membrane as a helical span at residues 516–536 (GAILYGCYWVALLMLYLAIIA). At 537 to 553 (RRCGKKPEQYSLAFAEV) the chain is on the extracellular side.

The protein belongs to the NodC/HAS family. Homodimers. Forms heterodimers with HAS2 and HAS1. Mg(2+) is required as a cofactor. Post-translationally, O-GlcNAcylation increases the hyaluronan synthase activity, HAS3 stability and its plasma membrane residence. The concentration of UDP-GlcNAc controls the level of O-GlcNAc modification.

The protein localises to the cell membrane. It localises to the golgi apparatus membrane. Its subcellular location is the golgi apparatus. It is found in the trans-Golgi network membrane. The protein resides in the early endosome. It carries out the reaction [hyaluronan](n) + UDP-N-acetyl-alpha-D-glucosamine = N-acetyl-beta-D-glucosaminyl-(1-&gt;4)-[hyaluronan](n) + UDP + H(+). The enzyme catalyses N-acetyl-beta-D-glucosaminyl-(1-&gt;4)-[hyaluronan](n) + UDP-alpha-D-glucuronate = [hyaluronan](n+1) + UDP + H(+). Its pathway is glycan biosynthesis; hyaluronan biosynthesis. With respect to regulation, the enzymatic activity depends on the availability of cytosolic levels of UDP-GlcUA and UDP-GlcNAc. In terms of biological role, catalyzes the addition of GlcNAc or GlcUA monosaccharides to the nascent hyaluronan polymer. Therefore, it is essential to hyaluronan synthesis a major component of most extracellular matrices that has a structural role in tissues architectures and regulates cell adhesion, migration and differentiation. This is one of three isoenzymes responsible for cellular hyaluronan synthesis. The polypeptide is Hyaluronan synthase 3 (Homo sapiens (Human)).